We begin with the raw amino-acid sequence, 627 residues long: Threonine--tRNA ligase (627 aa).

The editing domain stretch occupies residues M1 to A147. The tract at residues P208 to P507 is catalytic. Residues C300, H352, and H476 each coordinate Zn(2+).

It belongs to the class-II aminoacyl-tRNA synthetase family. In terms of assembly, homodimer. Zn(2+) is required as a cofactor.

Its subcellular location is the cytoplasm. It carries out the reaction tRNA(Thr) + L-threonine + ATP = L-threonyl-tRNA(Thr) + AMP + diphosphate + H(+). Functionally, catalyzes the attachment of threonine to tRNA(Thr) in a two-step reaction: L-threonine is first activated by ATP to form Thr-AMP and then transferred to the acceptor end of tRNA(Thr). Also edits incorrectly charged L-seryl-tRNA(Thr). The polypeptide is Threonine--tRNA ligase (Thermococcus onnurineus (strain NA1)).